We begin with the raw amino-acid sequence, 176 residues long: MSSNQQPVVLGKLGSCHGIKGWLKITAYTDSVEGIFDYSPWLIKENGEWREVKVIQWRYQGKAVVAELEGVTTRERAQMLTNCEIGILPQQMNALPEDEFYWRDLIGCEVINTTGYNMGIVDQIVETGSNDVLLVKANAKDSFGKVERMVPFVPGQFILKVDVQGKQILVDWDPDF.

The PRC barrel domain occupies 97–176 (EDEFYWRDLI…QILVDWDPDF (80 aa)).

Belongs to the RimM family. As to quaternary structure, binds ribosomal protein uS19.

The protein localises to the cytoplasm. An accessory protein needed during the final step in the assembly of 30S ribosomal subunit, possibly for assembly of the head region. Essential for efficient processing of 16S rRNA. May be needed both before and after RbfA during the maturation of 16S rRNA. It has affinity for free ribosomal 30S subunits but not for 70S ribosomes. In Shewanella oneidensis (strain ATCC 700550 / JCM 31522 / CIP 106686 / LMG 19005 / NCIMB 14063 / MR-1), this protein is Ribosome maturation factor RimM.